Consider the following 186-residue polypeptide: Nicotinamidase/pyrazinamidase (186 aa).

Catalysis depends on D8, which acts as the Proton acceptor. 4 residues coordinate Fe cation: D49, H51, H57, and H71. The active site involves K96. Residue C138 is the Nucleophile of the active site.

This sequence belongs to the isochorismatase family. Monomer. Requires Mn(2+) as cofactor. The cofactor is Fe(2+).

The catalysed reaction is nicotinamide + H2O = nicotinate + NH4(+). The enzyme catalyses pyrazinamide + H2O = pyrazine-2-carboxylate + NH4(+). The protein operates within cofactor biosynthesis; nicotinate biosynthesis; nicotinate from nicotinamide: step 1/1. With respect to regulation, is inhibited by Cu(2+), Zn(2+) and Fe(3+). Catalyzes the deamidation of nicotinamide (NAM) into nicotinate. Likely functions in the cyclical salvage pathway for production of NAD from nicotinamide. Functionally, is involved in the activation of the first-line antituberculous drug pyrazinamide (PZA) by converting it into the active form, pyrazinoic acid. The sequence is that of Nicotinamidase/pyrazinamidase from Mycobacterium tuberculosis (strain ATCC 25618 / H37Rv).